The sequence spans 241 residues: 1-(5-phosphoribosyl)-5-[(5-phosphoribosylamino)methylideneamino] imidazole-4-carboxamide isomerase (241 aa).

Residue D10 is the Proton acceptor of the active site. The Proton donor role is filled by D131.

This sequence belongs to the HisA/HisF family.

It localises to the cytoplasm. The catalysed reaction is 1-(5-phospho-beta-D-ribosyl)-5-[(5-phospho-beta-D-ribosylamino)methylideneamino]imidazole-4-carboxamide = 5-[(5-phospho-1-deoxy-D-ribulos-1-ylimino)methylamino]-1-(5-phospho-beta-D-ribosyl)imidazole-4-carboxamide. It participates in amino-acid biosynthesis; L-histidine biosynthesis; L-histidine from 5-phospho-alpha-D-ribose 1-diphosphate: step 4/9. This is 1-(5-phosphoribosyl)-5-[(5-phosphoribosylamino)methylideneamino] imidazole-4-carboxamide isomerase from Bifidobacterium longum (strain NCC 2705).